The sequence spans 173 residues: PTS system glucose-specific EIIA component (173 aa).

Residues 40–144 (DPTFAQKMMG…STVTPVVVTN (105 aa)) form the PTS EIIA type-1 domain. Residues His77 and His92 each coordinate Zn(2+). His92 (tele-phosphohistidine intermediate; for EIIA activity) is an active-site residue. Phosphohistidine; by HPr is present on His92.

Heterodimer with glycerol kinase (glpk). Zn(2+) serves as cofactor.

It is found in the cytoplasm. Its function is as follows. The phosphoenolpyruvate-dependent sugar phosphotransferase system (sugar PTS), a major carbohydrate active transport system, catalyzes the phosphorylation of incoming sugar substrates concomitantly with their translocation across the cell membrane. The enzyme II complex composed of PtsG and Crr is involved in glucose transport. The polypeptide is PTS system glucose-specific EIIA component (crr) (Halalkalibacterium halodurans (strain ATCC BAA-125 / DSM 18197 / FERM 7344 / JCM 9153 / C-125) (Bacillus halodurans)).